Reading from the N-terminus, the 486-residue chain is Glutamyl-tRNA(Gln) amidotransferase subunit A (486 aa).

Residues lysine 76 and serine 151 each act as charge relay system in the active site. Serine 175 acts as the Acyl-ester intermediate in catalysis.

The protein belongs to the amidase family. GatA subfamily. In terms of assembly, heterotrimer of A, B and C subunits.

It catalyses the reaction L-glutamyl-tRNA(Gln) + L-glutamine + ATP + H2O = L-glutaminyl-tRNA(Gln) + L-glutamate + ADP + phosphate + H(+). Its function is as follows. Allows the formation of correctly charged Gln-tRNA(Gln) through the transamidation of misacylated Glu-tRNA(Gln) in organisms which lack glutaminyl-tRNA synthetase. The reaction takes place in the presence of glutamine and ATP through an activated gamma-phospho-Glu-tRNA(Gln). The polypeptide is Glutamyl-tRNA(Gln) amidotransferase subunit A (Chromohalobacter salexigens (strain ATCC BAA-138 / DSM 3043 / CIP 106854 / NCIMB 13768 / 1H11)).